The chain runs to 117 residues: Thioredoxin (117 aa).

The Thioredoxin domain occupies 2 to 116; the sequence is AISLTEEDFV…FENIIKDFFG (115 aa). Cysteine 40 and cysteine 43 are joined by a disulfide.

The protein belongs to the thioredoxin family.

Its function is as follows. Participates in various redox reactions through the reversible oxidation of its active center dithiol to a disulfide and catalyzes dithiol-disulfide exchange reactions. This is Thioredoxin (trxA) from Borreliella burgdorferi (strain ATCC 35210 / DSM 4680 / CIP 102532 / B31) (Borrelia burgdorferi).